The primary structure comprises 591 residues: MQRDAIAAARNAGCSSGRISQPPPPPFYSAATGIYSSIHPPVALPTDPSLTLVAHLFARLPLADPGAPTLVDAATASAVSRADLRRLVASLAAGLRRRHGVRKGSVVLLLLPNSVAFPVSFLAVLAAGAVATTMNPSSSPAEIAAQARATGACLVLASRDGAARLPPLAAPVVLVPEILDHSAAADDGDDDQRVFAAFRAMLDGGGGDGTETAVPVVGQDDAVAILYSSGTSGRSKGVVLTHRNLIAMTELFVRFEASQYHARGARENVYMAALPMSHVYGLSLFAVGLLSIGATVVVMRRFDAGDAVAAIGRYKVTHMPLVPPIMAAMVRAAAAGGVPPSQVASLVQVSCGAAPITAALIHEFLQAFPHVDFIQGYGMTESTAVGTRGFNTSKHKKYTSVGLLAPNMHAKIVHLESSSCLPPGFSGELWLHGPGIMKGYLSDDDDACTRKDGWLRTGDIAYFDLDGYLYIVGRLKDTIKYKGFQIAPGDLEEVLIHHPEILDVAVTSAEDEEAGEIPVAFVVRRSGSNLSCKQVMEYVAKQVAPYKRVRKVVFVEAIPKSPAGKVLRRLLRNSHDTAAAATSSCSISSKL.

Residues S228, S229, G230, T231, S232, and K236 each contribute to the ATP site. Position 280 (Y280) interacts with (E)-4-coumaroyl-AMP. R301 lines the CoA pocket. The tract at residues 303–375 is SBD1; that stretch reads DAGDAVAAIG…QAFPHVDFIQ (73 aa). Positions 353, 375, 376, and 380 each coordinate (E)-4-coumaroyl-AMP. ATP-binding residues include Q375, G376, T380, D459, and R474. Residues 376–440 form an SBD2 region; sequence GYGMTESTAV…LHGPGIMKGY (65 aa). (E)-4-coumaroyl-AMP-binding residues include K476 and K480. Residues K482 and G483 each contribute to the CoA site. Position 565 (K565) interacts with ATP.

It belongs to the ATP-dependent AMP-binding enzyme family. Mg(2+) is required as a cofactor.

It carries out the reaction (E)-4-coumarate + ATP + CoA = (E)-4-coumaroyl-CoA + AMP + diphosphate. The catalysed reaction is (E)-4-coumarate + ATP + H(+) = (E)-4-coumaroyl-AMP + diphosphate. It catalyses the reaction (E)-4-coumaroyl-AMP + CoA = (E)-4-coumaroyl-CoA + AMP + H(+). In terms of biological role, carboxylate--CoA ligase that may use 4-coumarate as substrate. Follows a two-step reaction mechanism, wherein the carboxylate substrate first undergoes adenylation by ATP, followed by a thioesterification in the presence of CoA to yield the final CoA thioester. The chain is 4-coumarate--CoA ligase-like 3 (4CLL3) from Oryza sativa subsp. japonica (Rice).